The sequence spans 156 residues: ATP synthase subunit b (156 aa).

A helical membrane pass occupies residues Leu-7–Pro-27.

It belongs to the ATPase B chain family. As to quaternary structure, F-type ATPases have 2 components, F(1) - the catalytic core - and F(0) - the membrane proton channel. F(1) has five subunits: alpha(3), beta(3), gamma(1), delta(1), epsilon(1). F(0) has three main subunits: a(1), b(2) and c(10-14). The alpha and beta chains form an alternating ring which encloses part of the gamma chain. F(1) is attached to F(0) by a central stalk formed by the gamma and epsilon chains, while a peripheral stalk is formed by the delta and b chains.

The protein localises to the cell inner membrane. Functionally, f(1)F(0) ATP synthase produces ATP from ADP in the presence of a proton or sodium gradient. F-type ATPases consist of two structural domains, F(1) containing the extramembraneous catalytic core and F(0) containing the membrane proton channel, linked together by a central stalk and a peripheral stalk. During catalysis, ATP synthesis in the catalytic domain of F(1) is coupled via a rotary mechanism of the central stalk subunits to proton translocation. Component of the F(0) channel, it forms part of the peripheral stalk, linking F(1) to F(0). This Polaromonas sp. (strain JS666 / ATCC BAA-500) protein is ATP synthase subunit b.